The primary structure comprises 387 residues: Phosphoglycerate kinase (387 aa).

Substrate is bound by residues 21-23, R36, 59-62, R113, and R146; these read DLN and HLGR. ATP contacts are provided by residues K197, E314, and 340–343; that span reads GGDT.

The protein belongs to the phosphoglycerate kinase family. As to quaternary structure, monomer.

The protein localises to the cytoplasm. The catalysed reaction is (2R)-3-phosphoglycerate + ATP = (2R)-3-phospho-glyceroyl phosphate + ADP. It functions in the pathway carbohydrate degradation; glycolysis; pyruvate from D-glyceraldehyde 3-phosphate: step 2/5. The protein is Phosphoglycerate kinase of Alcanivorax borkumensis (strain ATCC 700651 / DSM 11573 / NCIMB 13689 / SK2).